The following is a 686-amino-acid chain: Methionine--tRNA ligase (686 aa).

The 'HIGH' region motif lies at 15–25 (PYANGPIHLGH). The Zn(2+) site is built by Cys-146, Cys-149, Cys-159, and Cys-162. A 'KMSKS' region motif is present at residues 332-336 (KMSKS). Lys-335 is an ATP binding site. Positions 585–686 (TFAKTDLRVA…DGAKPGQRIM (102 aa)) constitute a tRNA-binding domain.

This sequence belongs to the class-I aminoacyl-tRNA synthetase family. MetG type 1 subfamily. In terms of assembly, homodimer. Zn(2+) serves as cofactor.

The protein localises to the cytoplasm. The enzyme catalyses tRNA(Met) + L-methionine + ATP = L-methionyl-tRNA(Met) + AMP + diphosphate. Is required not only for elongation of protein synthesis but also for the initiation of all mRNA translation through initiator tRNA(fMet) aminoacylation. The polypeptide is Methionine--tRNA ligase (Psychromonas ingrahamii (strain DSM 17664 / CCUG 51855 / 37)).